Here is a 234-residue protein sequence, read N- to C-terminus: Gem-associated protein 8 (234 aa).

Positions 60 to 116 are disordered; sequence LAQSPAAKGGTSPKSRSKSPSASGDACRRRSRPGKPGPQRRSTEKPARFAEDNDSES. A compositionally biased stretch (low complexity) spans 67 to 83; that stretch reads KGGTSPKSRSKSPSASG. Basic and acidic residues predominate over residues 100–110; the sequence is RSTEKPARFAE. A coiled-coil region spans residues 130 to 153; the sequence is ITDELRQYFAETEQHREELRRQHQ.

In terms of assembly, part of the core SMN complex that contains SMN1, GEMIN2/SIP1, DDX20/GEMIN3, GEMIN4, GEMIN5, GEMIN6, GEMIN7, GEMIN8 and STRAP/UNRIP. Part of the SMN-Sm complex that contains SMN1, GEMIN2/SIP1, DDX20/GEMIN3, GEMIN4, GEMIN5, GEMIN6, GEMIN7, GEMIN8, STRAP/UNRIP and the Sm proteins SNRPB, SNRPD1, SNRPD2, SNRPD3, SNRPE, SNRPF and SNRPG. Interacts with GEMIN6; the interaction is direct. Interacts with GEMIN7; the interaction is direct. Interacts with SMN1; the interaction is direct. Interacts with GEMIN4; the interaction is direct.

The protein resides in the nucleus. Its subcellular location is the gem. It is found in the cytoplasm. Functionally, the SMN complex catalyzes the assembly of small nuclear ribonucleoproteins (snRNPs), the building blocks of the spliceosome, and thereby plays an important role in the splicing of cellular pre-mRNAs. Most spliceosomal snRNPs contain a common set of Sm proteins SNRPB, SNRPD1, SNRPD2, SNRPD3, SNRPE, SNRPF and SNRPG that assemble in a heptameric protein ring on the Sm site of the small nuclear RNA to form the core snRNP (Sm core). In the cytosol, the Sm proteins SNRPD1, SNRPD2, SNRPE, SNRPF and SNRPG are trapped in an inactive 6S pICln-Sm complex by the chaperone CLNS1A that controls the assembly of the core snRNP. To assemble core snRNPs, the SMN complex accepts the trapped 5Sm proteins from CLNS1A forming an intermediate. Binding of snRNA inside 5Sm triggers eviction of the SMN complex, thereby allowing binding of SNRPD3 and SNRPB to complete assembly of the core snRNP. The sequence is that of Gem-associated protein 8 (GEMIN8) from Bos taurus (Bovine).